A 403-amino-acid chain; its full sequence is Accessory Sec system protein translocase subunit SecY2 (403 aa).

Helical transmembrane passes span 17-37 (MLYT…SIVS), 63-83 (LNIF…LMLI), 105-125 (ILTL…YVSK), 131-151 (DNIY…VWLA), 157-177 (YGIA…MMHQ), 186-206 (HIVI…LLFI), 240-260 (ITLM…HFIL), 276-296 (FDSP…GYFL), 339-359 (WFGL…TLFV), and 366-386 (IYFS…AETI).

Belongs to the SecY/SEC61-alpha family. SecY2 subfamily. In terms of assembly, may form heterotrimers with SecE and SecG subunits (Potential). Component of the accessory SecA2/SecY2 protein translocase complex required to export cell wall protein SrpA.

The protein resides in the cell membrane. Functionally, the central subunit of a protein translocation channel (Potential). Part of the accessory SecA2/SecY2 system specifically required to export SraP, a serine-rich repeat cell wall protein encoded upstream in the same operon. The polypeptide is Accessory Sec system protein translocase subunit SecY2 (Staphylococcus aureus (strain NCTC 8325 / PS 47)).